A 714-amino-acid chain; its full sequence is SEC14 domain and spectrin repeat-containing protein 1 (714 aa).

The region spanning methionine 1 to histidine 153 is the CRAL-TRIO domain. Spectrin repeat units lie at residues serine 275–glutamine 381, tyrosine 384–leucine 497, and phenylalanine 503–glutamate 605. The interval glutamate 691–serine 714 is disordered. The segment covering leucine 696–leucine 707 has biased composition (acidic residues).

Belongs to the SOLO family.

Its function is as follows. May act as the primary docking protein directing membrane turnover and assembly of the transient receptor potential channels trpc4 and trpc5. Binds phospholipids. In Danio rerio (Zebrafish), this protein is SEC14 domain and spectrin repeat-containing protein 1 (sestd1).